The primary structure comprises 82 residues: UPF0337 protein PP_2059 (82 aa).

This sequence belongs to the UPF0337 (CsbD) family.

This chain is UPF0337 protein PP_2059, found in Pseudomonas putida (strain ATCC 47054 / DSM 6125 / CFBP 8728 / NCIMB 11950 / KT2440).